The sequence spans 117 residues: Large ribosomal subunit protein bL20c (117 aa).

The protein belongs to the bacterial ribosomal protein bL20 family.

It is found in the plastid. The protein resides in the chloroplast. Its function is as follows. Binds directly to 23S ribosomal RNA and is necessary for the in vitro assembly process of the 50S ribosomal subunit. It is not involved in the protein synthesizing functions of that subunit. This chain is Large ribosomal subunit protein bL20c, found in Lobularia maritima (Sweet alyssum).